Consider the following 665-residue polypeptide: Chaperone protein dnaK1 (665 aa).

Residue threonine 198 is modified to Phosphothreonine; by autocatalysis. A disordered region spans residues 634 to 665; that stretch reads DDPWDNQMNSNSRNSRYGNSRDDDPWDNDYFL. Low complexity predominate over residues 642–651; the sequence is NSNSRNSRYG.

It belongs to the heat shock protein 70 family.

Its function is as follows. Acts as a chaperone. The polypeptide is Chaperone protein dnaK1 (dnaK1) (Prochlorococcus marinus subsp. pastoris (strain CCMP1986 / NIES-2087 / MED4)).